The sequence spans 144 residues: MSNAYEEYMRQMVIPMRQELVRSGFEELTTEEAVTEFMENTSGTTLVVVNSVCGCAAGLARPSAGQAVVRAEKQPDHLVTVFAGQDKDATAKMREYFGEIPPSSPSMALLKGKEVVHFIHRHEIEGATMDEIITNLEQAFEKNC.

Belongs to the bacilliredoxin family.

The polypeptide is Bacilliredoxin BC_2157 (Bacillus cereus (strain ATCC 14579 / DSM 31 / CCUG 7414 / JCM 2152 / NBRC 15305 / NCIMB 9373 / NCTC 2599 / NRRL B-3711)).